Consider the following 598-residue polypeptide: Protein VASCULAR ASSOCIATED DEATH 1, chloroplastic (598 aa).

Positions Met-1 to Gly-11 are enriched in polar residues. The segment at Met-1–Glu-64 is disordered. A chloroplast-targeting transit peptide spans Met-1–Lys-68. N-linked (GlcNAc...) asparagine glycosylation is present at Asn-61. Residues Glu-70–Arg-134 enclose the GRAM domain. Residues Asp-272 to Lys-444 enclose the VASt domain. 2 N-linked (GlcNAc...) asparagine glycosylation sites follow: Asn-329 and Asn-494. Residues Gln-507–Leu-527 traverse the membrane as a helical segment. Residues Trp-553–Arg-595 are a coiled coil.

The protein localises to the membrane. It is found in the plastid. Its subcellular location is the chloroplast. Its function is as follows. Involved in ethylene- and salicylic acid-dependent cell death control associated with cells in the vicinity of vascular bundles. This Arabidopsis thaliana (Mouse-ear cress) protein is Protein VASCULAR ASSOCIATED DEATH 1, chloroplastic.